Here is an 84-residue protein sequence, read N- to C-terminus: Large ribosomal subunit protein bL27 (84 aa).

The tract at residues 1–22 (MAHKKAGGSTRNGRDSESKRLG) is disordered.

Belongs to the bacterial ribosomal protein bL27 family.

The sequence is that of Large ribosomal subunit protein bL27 from Shewanella loihica (strain ATCC BAA-1088 / PV-4).